A 502-amino-acid polypeptide reads, in one-letter code: Cyanidin 3-O-glucoside 5-O-glucosyltransferase (acyl-glucose) (502 aa).

The first 30 residues, 1 to 30 (MNMSCKFEIVLLVSWWLLLVLVFGVESSMF), serve as a signal peptide directing secretion. An N-linked (GlcNAc...) asparagine glycan is attached at asparagine 2. A beta-D-glucoside-binding positions include glutamine 52, histidine 150, and 196–197 (NE). Glutamate 197 functions as the Proton donor in the catalytic mechanism. Asparagine 303 carries an N-linked (GlcNAc...) asparagine glycan. A beta-D-glucoside is bound by residues tyrosine 320 and glutamate 388. The active-site Nucleophile is the glutamate 388. N-linked (GlcNAc...) asparagine glycosylation occurs at asparagine 425. The a beta-D-glucoside site is built by tryptophan 435 and phenylalanine 451.

Belongs to the glycosyl hydrolase 1 family. Expressed in petals.

It localises to the vacuole. The catalysed reaction is cyanidin 3-O-beta-D-glucoside + 1-O-(trans-sinapoyl)-beta-D-glucose = cyanidin 3,5-di-O-beta-D-glucoside + (E)-sinapate. It functions in the pathway pigment biosynthesis; anthocyanin biosynthesis. In terms of biological role, beta-glycosidase that catalyzes the transfer of glucose moiety to anthocyanidin 3-glucoside at the 5 position. Anthocyanins are ubiquitous colored pigments that are responsible for variations in petal color. Uses acyl-glucoses, but not UDP-glucose, as the glucose donor. This chain is Cyanidin 3-O-glucoside 5-O-glucosyltransferase (acyl-glucose) (AA5GT), found in Dianthus caryophyllus (Carnation).